The following is a 400-amino-acid chain: CCA-adding enzyme (400 aa).

G28 and R31 together coordinate ATP. CTP contacts are provided by G28 and R31. Residues D41 and D43 each contribute to the Mg(2+) site. The ATP site is built by R112, D155, R158, R161, and R164. 5 residues coordinate CTP: R112, D155, R158, R161, and R164.

This sequence belongs to the tRNA nucleotidyltransferase/poly(A) polymerase family. Bacterial CCA-adding enzyme type 3 subfamily. In terms of assembly, homodimer. Mg(2+) serves as cofactor.

The catalysed reaction is a tRNA precursor + 2 CTP + ATP = a tRNA with a 3' CCA end + 3 diphosphate. It catalyses the reaction a tRNA with a 3' CCA end + 2 CTP + ATP = a tRNA with a 3' CCACCA end + 3 diphosphate. Catalyzes the addition and repair of the essential 3'-terminal CCA sequence in tRNAs without using a nucleic acid template. Adds these three nucleotides in the order of C, C, and A to the tRNA nucleotide-73, using CTP and ATP as substrates and producing inorganic pyrophosphate. tRNA 3'-terminal CCA addition is required both for tRNA processing and repair. Also involved in tRNA surveillance by mediating tandem CCA addition to generate a CCACCA at the 3' terminus of unstable tRNAs. While stable tRNAs receive only 3'-terminal CCA, unstable tRNAs are marked with CCACCA and rapidly degraded. The polypeptide is CCA-adding enzyme (Staphylococcus aureus (strain Mu3 / ATCC 700698)).